Reading from the N-terminus, the 277-residue chain is Adaptin ear-binding coat-associated protein 1 (277 aa).

Residues Gly-164–Phe-277 are disordered. Positions Leu-187 to Ser-201 are enriched in pro residues. At Thr-211 the chain carries Phosphothreonine. A compositionally biased stretch (low complexity) spans Ser-222–Pro-234. Residues Ala-235–Ala-245 show a composition bias toward pro residues. Short sequence motifs (WXXF motif) lie at residues Trp-254 to Phe-257 and Trp-274 to Phe-277. Over residues Ser-258 to Phe-277 the composition is skewed to polar residues.

The protein belongs to the NECAP family. As to quaternary structure, interacts with AP1G1 and AP2A1 components of the adapter protein complexes AP-1 and AP-2. Interacts with the GAE domain proteins GGA1, GGA2 and GGA3. Interacts with AP2A2. In terms of tissue distribution, expressed predominantly in brain (at protein level).

It is found in the cytoplasmic vesicle. Its subcellular location is the clathrin-coated vesicle membrane. The protein resides in the cell membrane. Involved in endocytosis. The protein is Adaptin ear-binding coat-associated protein 1 (Necap1) of Rattus norvegicus (Rat).